Here is a 140-residue protein sequence, read N- to C-terminus: Nucleoside diphosphate kinase (140 aa).

ATP contacts are provided by lysine 11, phenylalanine 59, arginine 87, threonine 93, arginine 104, and asparagine 114. Histidine 117 (pros-phosphohistidine intermediate) is an active-site residue.

Belongs to the NDK family. In terms of assembly, homotetramer. Mg(2+) is required as a cofactor.

It localises to the cytoplasm. The catalysed reaction is a 2'-deoxyribonucleoside 5'-diphosphate + ATP = a 2'-deoxyribonucleoside 5'-triphosphate + ADP. It catalyses the reaction a ribonucleoside 5'-diphosphate + ATP = a ribonucleoside 5'-triphosphate + ADP. Its function is as follows. Major role in the synthesis of nucleoside triphosphates other than ATP. The ATP gamma phosphate is transferred to the NDP beta phosphate via a ping-pong mechanism, using a phosphorylated active-site intermediate. The polypeptide is Nucleoside diphosphate kinase (Rickettsia peacockii (strain Rustic)).